Consider the following 133-residue polypeptide: uncharacterized protein (133 aa).

A run of 2 helical transmembrane segments spans residues 13 to 33 and 73 to 93; these read FLLS…LFLS and FGNP…LLLL.

Its subcellular location is the membrane. This is an uncharacterized protein from Saccharomyces cerevisiae (strain ATCC 204508 / S288c) (Baker's yeast).